A 400-amino-acid chain; its full sequence is Tyrosine--tRNA ligase 2 (400 aa).

The 'HIGH' region motif lies at 46–55 (PSAPDIHLGH). The 'KMSKS' region signature appears at 230 to 234 (KMSKS). Residue K233 participates in ATP binding. Positions 339-399 (NNLIEAIVKI…GKKKIVKLLV (61 aa)) constitute an S4 RNA-binding domain.

It belongs to the class-I aminoacyl-tRNA synthetase family. TyrS type 2 subfamily. Homodimer.

Its subcellular location is the cytoplasm. The catalysed reaction is tRNA(Tyr) + L-tyrosine + ATP = L-tyrosyl-tRNA(Tyr) + AMP + diphosphate + H(+). Its function is as follows. Catalyzes the attachment of tyrosine to tRNA(Tyr) in a two-step reaction: tyrosine is first activated by ATP to form Tyr-AMP and then transferred to the acceptor end of tRNA(Tyr). The chain is Tyrosine--tRNA ligase 2 from Clostridium acetobutylicum (strain ATCC 824 / DSM 792 / JCM 1419 / IAM 19013 / LMG 5710 / NBRC 13948 / NRRL B-527 / VKM B-1787 / 2291 / W).